Consider the following 983-residue polypeptide: Pro-apoptotic serine protease NMA111 (983 aa).

The tract at residues 1-40 (MSVPTKRRLSFDESTNKRFLNGTHSTENNTSNIEVDEDYG) is disordered. Residues 22–33 (GTHSTENNTSNI) show a composition bias toward polar residues. A serine protease region spans residues 59–260 (WQETITKVVN…LPIYRPLRAL (202 aa)). Residues H108, D139, and S222 each act as charge relay system in the active site. PDZ domains follow at residues 287–365 (RRLG…QRGG) and 867–948 (FWSG…MSFD).

The protein belongs to the peptidase S1C family.

It is found in the nucleus. Functionally, nuclear serine protease which mediates apoptosis. The chain is Pro-apoptotic serine protease NMA111 (NMA111) from Scheffersomyces stipitis (strain ATCC 58785 / CBS 6054 / NBRC 10063 / NRRL Y-11545) (Yeast).